The chain runs to 276 residues: Light-independent protochlorophyllide reductase iron-sulfur ATP-binding protein (276 aa).

Residues G12–T17 and K41 contribute to the ATP site. A Mg(2+)-binding site is contributed by S16. [4Fe-4S] cluster contacts are provided by C97 and C131. N182–R183 contributes to the ATP binding site.

Belongs to the NifH/BchL/ChlL family. Homodimer. Protochlorophyllide reductase is composed of three subunits; BchL, BchN and BchB. [4Fe-4S] cluster is required as a cofactor.

It catalyses the reaction chlorophyllide a + oxidized 2[4Fe-4S]-[ferredoxin] + 2 ADP + 2 phosphate = protochlorophyllide a + reduced 2[4Fe-4S]-[ferredoxin] + 2 ATP + 2 H2O. The protein operates within porphyrin-containing compound metabolism; bacteriochlorophyll biosynthesis (light-independent). Functionally, component of the dark-operative protochlorophyllide reductase (DPOR) that uses Mg-ATP and reduced ferredoxin to reduce ring D of protochlorophyllide (Pchlide) to form chlorophyllide a (Chlide). This reaction is light-independent. The L component serves as a unique electron donor to the NB-component of the complex, and binds Mg-ATP. In Chlorobium luteolum (strain DSM 273 / BCRC 81028 / 2530) (Pelodictyon luteolum), this protein is Light-independent protochlorophyllide reductase iron-sulfur ATP-binding protein.